A 215-amino-acid polypeptide reads, in one-letter code: Casparian strip membrane protein 3 (215 aa).

Residues Met1 to Ile26 are disordered. The Cytoplasmic portion of the chain corresponds to Met1–Ala55. Residues Ile56–Met76 form a helical membrane-spanning segment. At Gly77–Thr101 the chain is on the extracellular side. A helical transmembrane segment spans residues Phe102–Phe122. The Cytoplasmic portion of the chain corresponds to Ser123–Arg136. A helical membrane pass occupies residues Leu137 to Ala157. Residues Ala158–Thr189 are Extracellular-facing. The helical transmembrane segment at Ala190–Phe210 threads the bilayer. Over Ala211–Asn215 the chain is Cytoplasmic.

Belongs to the Casparian strip membrane proteins (CASP) family. Homodimer and heterodimers.

The protein resides in the cell membrane. In terms of biological role, regulates membrane-cell wall junctions and localized cell wall deposition. Required for establishment of the Casparian strip membrane domain (CSD) and the subsequent formation of Casparian strips, a cell wall modification of the root endodermis that determines an apoplastic barrier between the intraorganismal apoplasm and the extraorganismal apoplasm and prevents lateral diffusion. This Ricinus communis (Castor bean) protein is Casparian strip membrane protein 3.